Reading from the N-terminus, the 335-residue chain is MSQITLPAFHMPFQSAGCHPGLAETREAAWEWAAAEGLDLSVPARRKMIRTRPELWISLIFPQATQAHLDLFCQWLFWAFLVDDEFDDGPAGRDPLMCERAIARLVDVFDGAAPNGPMERALAGLRDRTCRGRSPQWNRQFRRDTAAWLWTYYAEAVERAAGQVPSRAEFAKHRRDSVAMQPFLCLHEITAGIDLPDSARSLPAYIALRNAVTDHSGLCNDICSFEKEAALGYEHNAVRLIQRDRGSTLQEAVDEAGIQLARIAERVQRAERELIEEIEAAGIDGPTRTALERCVRDYRGLVRGDFDYHARAERYTRPDLVELDERDSLSRHFAA.

Mg(2+) contacts are provided by Asp83, Asp87, Asn220, Ser224, and Glu228. The DDXXD motif motif lies at 83 to 87 (DDEFD). Residues 220-228 (NDICSFEKE) carry the NSE/DTE motif motif.

This sequence belongs to the terpene synthase family. Mg(2+) serves as cofactor. The cofactor is Mn(2+).

It catalyses the reaction (2E,6E)-farnesyl diphosphate = (+)-(E)-beta-caryophyllene + diphosphate. It carries out the reaction (+)-(E)-beta-caryophyllene + H2O = (+)-caryolan-1-ol. Its pathway is secondary metabolite biosynthesis; terpenoid biosynthesis. In terms of biological role, sesquiterpene cyclase that first catalyzes the cyclization of farnesyl diphosphate (FPP) to the bicyclic sesquiterpene (+)-beta-caryophyllene intermediate, and then its conversion to (+)-caryolan-1-ol via a second cyclization and the addition of a water molecule. In Streptomyces griseus subsp. griseus (strain JCM 4626 / CBS 651.72 / NBRC 13350 / KCC S-0626 / ISP 5235), this protein is (+)-caryolan-1-ol synthase (gcoA).